The primary structure comprises 93 residues: DNA-directed RNA polymerase subunit omega (93 aa).

The protein belongs to the RNA polymerase subunit omega family. The RNAP catalytic core consists of 2 alpha, 1 beta, 1 beta' and 1 omega subunit. When a sigma factor is associated with the core the holoenzyme is formed, which can initiate transcription.

The enzyme catalyses RNA(n) + a ribonucleoside 5'-triphosphate = RNA(n+1) + diphosphate. In terms of biological role, promotes RNA polymerase assembly. Latches the N- and C-terminal regions of the beta' subunit thereby facilitating its interaction with the beta and alpha subunits. This Actinobacillus pleuropneumoniae serotype 7 (strain AP76) protein is DNA-directed RNA polymerase subunit omega.